The chain runs to 97 residues: uncharacterized protein (97 aa).

This is an uncharacterized protein from Orgyia pseudotsugata multicapsid polyhedrosis virus (OpMNPV).